The chain runs to 937 residues: MMRWPPCSRPLLGVCTLLSLALLGHILLHDLEVVPRELRGFSQDEIHQACQPGASSPECRGSPRAAPTQCDLPPNSRFDCAPDKGITPQQCEARGCCYMPAEWPPDAQMGQPWCFFPPSYPSYRLENLTTTETGYTATLTRAVPTFFPKDIMTLRLDMLMETESRLHFTIKDPANRRYEVPLETPRVYSQAPFTLYSVEFSEEPFGVVVRRKLDGRVLLNTTVAPLFFADQFLQLSTSLPSQHITGLAEHLGSLMLSTNWTKITLWNRDIAPEPNVNLYGSHPFYLVLEDGGLAHGVFLLNSNAMDVVLQPSPALSWRSTGGILDVYIFLGPEPKSVVQQYLDVVGYPFMPPYWGLGFHLCRWGYSTSAITRQVVENMTRAYFPLDVQWNDLDYMDARRDFTFNKDHFGDFPAMVQELHQGGRRYIMIVDPAISSSGPAGTYRPYDEGLRRGVFITNETGQPLIGQVWPGLTAFPDFTNPETLDWWQDMVTEFHAQVPFDGMWIDMNEPSNFVRGSVDGCPDNSLENPPYLPGVVGGTLRAATICASSHQFLSTHYDLHNLYGLTEALASHRALVKARGMRPFVISRSTFAGHGRYSGHWTGDVWSNWEQLSYSVPEILLFNLLGVPLVGADICGFLGNTSEELCVRWTQLGAFYPFMRNHNALNSQPQEPYRFSETAQQAMRKAFTLRYVLLPYLYTLFHRAHVRGETVARPLFLEFPEDPSTWTVDRQLLWGEALLITPVLEAEKVEVTGYFPQGTWYDLQTVPMEAFGSLPPPAPLTSVIHSKGQWVTLSAPLDTINVHLRAGHIIPMQGPALTTTESRKQHMALAVALTASGEAQGELFWDDGESLGVLDGGDYTQLIFLAKNNTFVNKLVHVSSEGASLQLRNVTVLGVATAPQQVLCNSVPVSNFTFSPDTETLAIPVSLTMGEQFVISWS.

The first 23 residues, 1–23 (MMRWPPCSRPLLGVCTLLSLALL), serve as a signal peptide directing secretion. The propeptide occupies 24-60 (GHILLHDLEVVPRELRGFSQDEIHQACQPGASSPECR). In terms of domain architecture, P-type spans 68–118 (TQCDLPPNSRFDCAPDKGITPQQCEARGCCYMPAEWPPDAQMGQPWCFFPP). 3 disulfides stabilise this stretch: Cys-70-Cys-97, Cys-80-Cys-96, and Cys-91-Cys-114. 4 N-linked (GlcNAc...) asparagine glycosylation sites follow: Asn-127, Asn-220, Asn-259, and Asn-377. Asp-391 serves as a coordination point for substrate. Asn-457 is a glycosylation site (N-linked (GlcNAc...) asparagine). Asp-505 acts as the Nucleophile in catalysis. The active site involves Glu-508. Cys-520 and Cys-545 form a disulfide bridge. Residues Arg-587 and Asp-603 each contribute to the substrate site. An intrachain disulfide couples Cys-634 to Cys-645. N-linked (GlcNAc...) asparagine glycosylation is present at Asn-639. His-661 lines the substrate pocket. 3 N-linked (GlcNAc...) asparagine glycosylation sites follow: Asn-867, Asn-888, and Asn-910.

It belongs to the glycosyl hydrolase 31 family.

The protein localises to the lysosome. It localises to the lysosome membrane. The catalysed reaction is Hydrolysis of terminal, non-reducing (1-&gt;4)-linked alpha-D-glucose residues with release of alpha-D-glucose.. Its function is as follows. Essential for the degradation of glycogen in lysosomes. Has highest activity on alpha-1,4-linked glycosidic linkages, but can also hydrolyze alpha-1,6-linked glucans. This is Lysosomal alpha-glucosidase (GAA) from Bos taurus (Bovine).